We begin with the raw amino-acid sequence, 356 residues long: MKRLLNPTRLRLDWLRRSSIDVTTAPHVPVLCDTAIEYLQPVPGGTYFDMTFGAGGHTRRLLEKCPEAKVYALDRDPLAHQLARDMSESEEFKGRLIPLLGKFSDLPKLFKEHGLAKNSVDGMLFDFGCSSMQFDEAVRGFSISRDGPLDMRMDGGHSGGVTAADVLANVEEGDLVKILRMYGEEKAAKKIARGLVDARNALFKIETTKQLADIIENIMDGGTRKDKLRRPAHSATKTFQAIRIFVNNELNEINYGMVLANEILRVDGRLVTITFHSLEDTIVKRHINGNVLAGAANALPLKYSSHYAIDEPDILESLTKKSWKQLHRHVIVPDADEVARNTRSRSAKLRAAVKTN.

Residues 55-57, Asp-74, Phe-103, Asp-126, and Gln-133 each bind S-adenosyl-L-methionine; that span reads GGH.

It belongs to the methyltransferase superfamily. RsmH family.

Functionally, probable S-adenosyl-L-methionine-dependent methyltransferase. In Drosophila melanogaster (Fruit fly), this protein is Probable methyltransferase-like protein 15 homolog.